Consider the following 1790-residue polypeptide: MWSTVALCLLVGLSYVSSSSPAWKDNTEYVYSVNGRTLTGLEETADQYSGVFLEAKLHLSIRPDGKLQGRISEPKFAQILSQLPDGWKSEIPDSQISYKQLQLSQKPFQLVLENGLIKRLIVEKDTLNWEANIIKSIVSQFQMDLQGENALQNPTSSFPTNEYMDAVFKTMEETVTGKTETIYDIHRLPEYLVQSQPWIAPQYKLKGEGDLIEVIKSKNYTNARDRPSYHYGFGEIEESEPTANKMGQFFIRQSNSRAILTGKPSRYIIQSTYTVNKIMVNPILKNKEMGSITSMVNVTLLEINNQQQQPEELSNPLDIGNLVYTYGQPKNNQVHSKLNENLMEDSSSEESSEQEMTHRRFRRSANSLTKQWRESSEEWNQQQQQPRPQLTRAPHSPLLPSMVGYHGKSIKENKDFDIRQNVENLVTEISDEIKQSEKTISKHTLDKYTILNTLVRLMDEDDIQFVAEQMYSQMKNGQQRYTWSIFRDSVAEAGTGPALLNIKKWIETKKIQKTEAAQVIGTLAQSTRFPTEEYMRKFFELATETQVRQQETLNQTCILSYTNLVHKVYINRNESHNQFPVHAFGSFYTKKGREFVKTTVIPHLKQELEKAISNADNNKIHVMIRALGNIGHKSILNVFQPYFEGEKQVSQFQRLMMVACMDRLADCYPHIARSVFYKIYQNTAELPEIRVVAVHQLIRANPPVEMLQRMAQYTNTDSQEEVNAAVKSVIESSCKLESSKHAELRKAAQSARPLLTKKQYGMEQSYINLRDYVAEQMGLELHVQRTSHSSAESSFPKIMKFQLHQHNHGMKQHILSTGGMISSIRELLNVLYRQTEVFQQEKSQRSQEQGKDNEWSSANIARLMNYERDEREQLEAIIYAQVEDVQKLWSFDNQTLEHLPEVIRQQEEIYRQGKDFSYVKLKQLNEMALSFPTEMGLPFLYTYDVPVLMKVEGKIRALANPAISRNNKLTKPEQISTEIKARVTCTGKTQSHLSFVTPFDHQIYMAGYDKNMYVSIPVNARLEMDVKSKEAKIEFEVEQQQQDSRLVHITSTPYTSRSDVMAISPVALRPNTYVIKSHRNNHRYFDFNFGKKETGLTFRGWGHHPEQSIGFNDLVSMWQSRGVAGVWEQLWDKCSTEYSEATISFIPSQSTTRKATFRINVDQKYQKQPETQSPEDLLTLNQLSSKLQKDEPKQRQQEIKKHVGSGINSALLSCSDISLEFEGDKKYEHVVGFAVAKSNADPKSRVMFYYKNKNENKQGALEIRSEIPNTNGLNLDDSLDTEPSTKYNMRLQYGNSENDAFEISAQAQLSRSQERKQYLINQDPLYHVCKEQMQQKNFQLPACQNMTIKANFLDHIKYQVQYQKLNWKLVETLEGMFKGLRVLYYPMTEIKSISSVGQNVVEGEVQFQPEDFRQVNVTVRNTDEETVFFNISLNNELLRTLLVPHPVFHAKCRFAGLMQGQQNYRPTCVIDQTTAQTFSNKTYSVNLDKEPTVVMQYVPKDARVNGQQSKSVEQLLRESIENYVVLVRQVAANQKEVIINLNHPRTQGKTVKIEMKPSEDRQKSARNPAAKVTIDGQEMHFDDKQIADKCDGYVQVYALPNGEVKLEVEDAFYLIYDGQRVKVTATGNKLRDSVYGLCGRFSQDKHEDFTVPSNCVTRDTRKFVESYQVEKGQQWRNSPSEQCIKKVLPLYTNVISNQNGSQMRTKLASGTVMKHRYIEENGEICFTIRPLPVCNTSVKQVVTKNVPVHCIQGTKTAYYYKSLIDQGGNPDFSRKSETRTARMEVAAQCN.

A signal peptide spans 1–19; it reads MWSTVALCLLVGLSYVSSS. The Vitellogenin domain maps to 23–799; the sequence is WKDNTEYVYS…SAESSFPKIM (777 aa). 2 N-linked (GlcNAc...) asparagine glycosylation sites follow: Asn219 and Asn297. Residues 342-353 are compositionally biased toward acidic residues; it reads LMEDSSSEESSE. Residues 342–400 are disordered; the sequence is LMEDSSSEESSEQEMTHRRFRRSANSLTKQWRESSEEWNQQQQQPRPQLTRAPHSPLLP. Residues 378–389 are compositionally biased toward low complexity; that stretch reads EWNQQQQQPRPQ. 9 N-linked (GlcNAc...) asparagine glycosylation sites follow: Asn554, Asn573, Asn893, Asn1345, Asn1416, Asn1430, Asn1480, Asn1699, and Asn1735. The region spanning 1466-1675 is the VWFD domain; it reads PTCVIDQTTA…SYQVEKGQQW (210 aa). Cysteines 1468 and 1638 form a disulfide.

The protein localises to the secreted. Its function is as follows. Precursor of the egg-yolk proteins that are sources of nutrients during embryonic development. This Anthonomus grandis (Mexican cotton boll weevil) protein is Vitellogenin (VTG).